We begin with the raw amino-acid sequence, 508 residues long: Photosystem II CP47 reaction center protein (508 aa).

The next 6 helical transmembrane spans lie at 21 to 36 (SVHI…WAGS), 101 to 115 (IVFS…IWHW), 140 to 156 (GIHL…FGAF), 203 to 218 (IAAG…FHLS), 237 to 252 (VLSS…AFVV), and 457 to 472 (SFAL…HGAR).

This sequence belongs to the PsbB/PsbC family. PsbB subfamily. As to quaternary structure, PSII is composed of 1 copy each of membrane proteins PsbA, PsbB, PsbC, PsbD, PsbE, PsbF, PsbH, PsbI, PsbJ, PsbK, PsbL, PsbM, PsbT, PsbX, PsbY, PsbZ, Psb30/Ycf12, at least 3 peripheral proteins of the oxygen-evolving complex and a large number of cofactors. It forms dimeric complexes. It depends on Binds multiple chlorophylls. PSII binds additional chlorophylls, carotenoids and specific lipids. as a cofactor.

Its subcellular location is the plastid. It localises to the chloroplast thylakoid membrane. Functionally, one of the components of the core complex of photosystem II (PSII). It binds chlorophyll and helps catalyze the primary light-induced photochemical processes of PSII. PSII is a light-driven water:plastoquinone oxidoreductase, using light energy to abstract electrons from H(2)O, generating O(2) and a proton gradient subsequently used for ATP formation. The protein is Photosystem II CP47 reaction center protein of Olimarabidopsis pumila (Dwarf rocket).